The sequence spans 447 residues: Glutamyl-tRNA reductase (447 aa).

Substrate is bound by residues 45–48 (TCNR), Ser111, 116–118 (ETE), and Gln122. Cys46 serves as the catalytic Nucleophile. 191–196 (GTGKYA) contacts NADP(+).

It belongs to the glutamyl-tRNA reductase family. As to quaternary structure, homodimer.

It catalyses the reaction (S)-4-amino-5-oxopentanoate + tRNA(Glu) + NADP(+) = L-glutamyl-tRNA(Glu) + NADPH + H(+). It functions in the pathway porphyrin-containing compound metabolism; protoporphyrin-IX biosynthesis; 5-aminolevulinate from L-glutamyl-tRNA(Glu): step 1/2. Functionally, catalyzes the NADPH-dependent reduction of glutamyl-tRNA(Glu) to glutamate 1-semialdehyde (GSA). This chain is Glutamyl-tRNA reductase, found in Tropheryma whipplei (strain Twist) (Whipple's bacillus).